Here is an 807-residue protein sequence, read N- to C-terminus: Glycerol-3-phosphate acyltransferase (807 aa).

An HXXXXD motif motif is present at residues 305 to 310 (CHRSHM).

Belongs to the GPAT/DAPAT family.

The protein localises to the cell inner membrane. It catalyses the reaction sn-glycerol 3-phosphate + an acyl-CoA = a 1-acyl-sn-glycero-3-phosphate + CoA. It participates in phospholipid metabolism; CDP-diacylglycerol biosynthesis; CDP-diacylglycerol from sn-glycerol 3-phosphate: step 1/3. This is Glycerol-3-phosphate acyltransferase from Klebsiella pneumoniae subsp. pneumoniae (strain ATCC 700721 / MGH 78578).